Here is a 116-residue protein sequence, read N- to C-terminus: MIGCDIVACSRIESIYNRHNTLFLDKFLSKQEQAYIKNTNTIAGFWAIKEAASKALGVGISKECSFFDIIIFKDNKNAPHIKFSTKVMKEFDIKSASVSVAHDGGFAIAVVAIEKN.

The Mg(2+) site is built by aspartate 5 and glutamate 50.

Belongs to the P-Pant transferase superfamily. AcpS family. Mg(2+) is required as a cofactor.

It localises to the cytoplasm. It carries out the reaction apo-[ACP] + CoA = holo-[ACP] + adenosine 3',5'-bisphosphate + H(+). Its function is as follows. Transfers the 4'-phosphopantetheine moiety from coenzyme A to a Ser of acyl-carrier-protein. This chain is Holo-[acyl-carrier-protein] synthase, found in Campylobacter lari (strain RM2100 / D67 / ATCC BAA-1060).